The primary structure comprises 565 residues: Arginine--tRNA ligase (565 aa).

Residues 128–138 (ANPTGPLHVGH) carry the 'HIGH' region motif.

Belongs to the class-I aminoacyl-tRNA synthetase family. In terms of assembly, monomer.

The protein resides in the cytoplasm. The catalysed reaction is tRNA(Arg) + L-arginine + ATP = L-arginyl-tRNA(Arg) + AMP + diphosphate. This is Arginine--tRNA ligase from Albidiferax ferrireducens (strain ATCC BAA-621 / DSM 15236 / T118) (Rhodoferax ferrireducens).